A 349-amino-acid polypeptide reads, in one-letter code: Isopentenyl-diphosphate delta-isomerase (349 aa).

Substrate is bound at residue 7-8 (RK). FMN contacts are provided by residues Ser-65, 66 to 68 (SMT), Ser-96, and Asn-124. 96 to 98 (SQR) serves as a coordination point for substrate. Gln-159 contributes to the substrate binding site. Residue Glu-160 coordinates Mg(2+). FMN-binding positions include Lys-191, Thr-221, 271–273 (GIR), and 292–293 (AA).

Belongs to the IPP isomerase type 2 family. In terms of assembly, homooctamer. Dimer of tetramers. Requires FMN as cofactor. NADPH serves as cofactor. Mg(2+) is required as a cofactor.

The protein localises to the cytoplasm. The catalysed reaction is isopentenyl diphosphate = dimethylallyl diphosphate. In terms of biological role, involved in the biosynthesis of isoprenoids. Catalyzes the 1,3-allylic rearrangement of the homoallylic substrate isopentenyl (IPP) to its allylic isomer, dimethylallyl diphosphate (DMAPP). The protein is Isopentenyl-diphosphate delta-isomerase of Synechocystis sp. (strain ATCC 27184 / PCC 6803 / Kazusa).